We begin with the raw amino-acid sequence, 183 residues long: Putative manganese efflux pump MntP (183 aa).

6 consecutive transmembrane segments (helical) span residues 3–23 (TISV…LSIY), 43–63 (TFGI…ILFI), 66–86 (ISLY…LMML), 107–127 (LIIM…TFSI), 134–154 (FLYT…GFIL), and 161–181 (ILGQ…SINI).

It belongs to the MntP (TC 9.B.29) family.

Its subcellular location is the cell inner membrane. Functionally, probably functions as a manganese efflux pump. This Fusobacterium nucleatum subsp. nucleatum (strain ATCC 25586 / DSM 15643 / BCRC 10681 / CIP 101130 / JCM 8532 / KCTC 2640 / LMG 13131 / VPI 4355) protein is Putative manganese efflux pump MntP.